The chain runs to 317 residues: MALATGLSPAMFIDLERDAWRALRAATPLPLKSEDIDGLRGLGEHLDLDEVVDVYLPLSRLLNLQVAAAQRLWAEQQAFLGGSTQKVPYIIAIAGSVAVGKSTTARILQALLKRWPDHPRVELVTTDGFLFPNDVLTERDLMKRKGFPESYDRRALVRFLAELKAGRAEVAAPVYSHLVYDVVPGEAQVVRQPDILILEGLNVLQAGAQEGKQMPATFLSDFFDFSIYVDAHEHDIRRWYVNRFLKLQQTAFRDERSYFRRFSELNHEQAIQLAESVWGEINGPNLAQNIAPTRSRARLILLKGPDHKVKRVRLRKL.

95-102 (GSVAVGKS) is a binding site for ATP.

This sequence belongs to the prokaryotic pantothenate kinase family.

It localises to the cytoplasm. The catalysed reaction is (R)-pantothenate + ATP = (R)-4'-phosphopantothenate + ADP + H(+). It functions in the pathway cofactor biosynthesis; coenzyme A biosynthesis; CoA from (R)-pantothenate: step 1/5. The polypeptide is Pantothenate kinase (Myxococcus xanthus (strain DK1622)).